Here is a 303-residue protein sequence, read N- to C-terminus: Glutathione transport system permease protein GsiD (303 aa).

A run of 6 helical transmembrane segments spans residues 40–60, 105–125, 144–164, 165–185, 222–242, and 266–286; these read AMTAALFVILLIVVAIFARWI, LAAGVFAVFIGAAIGTLLGLL, LFAFPGILLAIAVVAVLGSGI, ANVIIAVAIFSIPAFARLVRG, IVVFFTMRIGTSIISAASLSF, and VIAPHVAVFPALAIFLTVLAF. An ABC transmembrane type-1 domain is found at 101–290; that stretch reads AQISLAAGVF…LTVLAFNLLG (190 aa).

The protein belongs to the binding-protein-dependent transport system permease family. The complex is composed of two ATP-binding proteins (GsiA), two transmembrane proteins (GsiC and GsiD) and a solute-binding protein (GsiB).

It is found in the cell inner membrane. In terms of biological role, part of the ABC transporter complex GsiABCD involved in glutathione import. Probably responsible for the translocation of the substrate across the membrane. The protein is Glutathione transport system permease protein GsiD of Escherichia coli O6:K15:H31 (strain 536 / UPEC).